The chain runs to 104 residues: DNA-directed RNA polymerase subunit omega (104 aa).

The protein belongs to the RNA polymerase subunit omega family. The RNAP catalytic core consists of 2 alpha, 1 beta, 1 beta' and 1 omega subunit. When a sigma factor is associated with the core the holoenzyme is formed, which can initiate transcription.

It carries out the reaction RNA(n) + a ribonucleoside 5'-triphosphate = RNA(n+1) + diphosphate. Functionally, promotes RNA polymerase assembly. Latches the N- and C-terminal regions of the beta' subunit thereby facilitating its interaction with the beta and alpha subunits. This Streptococcus pyogenes serotype M1 protein is DNA-directed RNA polymerase subunit omega (rpoZ).